Here is a 53-residue protein sequence, read N- to C-terminus: UPF0391 membrane protein KPK_4780 (53 aa).

Transmembrane regions (helical) follow at residues 4–24 and 30–47; these read WGII…GGLA and AAKI…VSLF.

This sequence belongs to the UPF0391 family.

It is found in the cell membrane. In Klebsiella pneumoniae (strain 342), this protein is UPF0391 membrane protein KPK_4780.